The following is a 646-amino-acid chain: Threonine--tRNA ligase (646 aa).

In terms of domain architecture, TGS spans 1 to 63; it reads MAQISLTFPD…EADAKIAIHT (63 aa). Positions 247-544 are catalytic; that stretch reads DHRKLGKEME…LIENYAGKLP (298 aa). Zn(2+) is bound by residues Cys344, His395, and His521.

This sequence belongs to the class-II aminoacyl-tRNA synthetase family. As to quaternary structure, homodimer. Requires Zn(2+) as cofactor.

Its subcellular location is the cytoplasm. The enzyme catalyses tRNA(Thr) + L-threonine + ATP = L-threonyl-tRNA(Thr) + AMP + diphosphate + H(+). Catalyzes the attachment of threonine to tRNA(Thr) in a two-step reaction: L-threonine is first activated by ATP to form Thr-AMP and then transferred to the acceptor end of tRNA(Thr). Also edits incorrectly charged L-seryl-tRNA(Thr). The polypeptide is Threonine--tRNA ligase (Cereibacter sphaeroides (strain ATCC 17025 / ATH 2.4.3) (Rhodobacter sphaeroides)).